A 397-amino-acid chain; its full sequence is Putative 8-amino-7-oxononanoate synthase (397 aa).

Residue arginine 22 participates in substrate binding. A pyridoxal 5'-phosphate-binding site is contributed by 109-110 (GW). Residue histidine 139 coordinates substrate. Pyridoxal 5'-phosphate contacts are provided by residues serine 187, 212-215 (DEAH), and 241-244 (TFSK). N6-(pyridoxal phosphate)lysine is present on lysine 244. Threonine 358 contributes to the substrate binding site.

The protein belongs to the class-II pyridoxal-phosphate-dependent aminotransferase family. BioF subfamily. As to quaternary structure, homodimer. The cofactor is pyridoxal 5'-phosphate.

It carries out the reaction 6-carboxyhexanoyl-[ACP] + L-alanine + H(+) = (8S)-8-amino-7-oxononanoate + holo-[ACP] + CO2. The protein operates within cofactor biosynthesis; biotin biosynthesis. In terms of biological role, catalyzes the decarboxylative condensation of pimeloyl-[acyl-carrier protein] and L-alanine to produce 8-amino-7-oxononanoate (AON), [acyl-carrier protein], and carbon dioxide. This Bordetella parapertussis (strain 12822 / ATCC BAA-587 / NCTC 13253) protein is Putative 8-amino-7-oxononanoate synthase (bioF).